A 1255-amino-acid chain; its full sequence is Membrane-associated guanylate kinase, WW and PDZ domain-containing protein 1 (1255 aa).

The region spanning 17–105 (ECTVKRGPQG…AVTFKAVRQG (89 aa)) is the PDZ 1 domain. The Guanylate kinase-like domain occupies 96-287 (AVTFKAVRQG…APITDPSQKF (192 aa)). 103–110 (RQGGRLNK) is a binding site for ATP. Disordered stretches follow at residues 208-227 (HSLQSGSKQSTPKRTKSYND) and 235-265 (HTENEEEEDVPEMNSSFTADSGDQDEPTLQE). The WW 1 domain maps to 300 to 333 (GPLPENWEMAYTENGEVYFIDHNAKTTSWLDPRC). Ser357 is subject to Phosphoserine. A WW 2 domain is found at 359-392 (LELPAGWEKIEDPVYGVYYVDHINRKTQYENPVL). The disordered stretch occupies residues 395–462 (KRKRQLEQQQ…QGKPFFTRNP (68 aa)). The segment covering 402-414 (QQQQQQQHQQQPQ) has biased composition (low complexity). Pro residues predominate over residues 434 to 444 (PVAPSHPPSNP). A PDZ 2 domain is found at 471–553 (HTKLRKSSRG…GASVDLELCR (83 aa)). A compositionally biased stretch (polar residues) spans 585–601 (QETYDSPASHSSKTGKV). 2 disordered regions span residues 585-622 (QETYDSPASHSSKTGKVSNMKDARPSSPADVASNSSHG) and 719-820 (QRGG…GERD). A PDZ 3 domain is found at 642–720 (TVHIVKGPMG…GSEVTLLVQR (79 aa)). Residues Ser729 and Ser740 each carry the phosphoserine modification. The segment covering 741–755 (QNSSQHSVSSLRSLH) has biased composition (low complexity). The residue at position 799 (Ser799) is a Phosphoserine. In terms of domain architecture, PDZ 4 spans 840 to 922 (DIFLWRKETG…QGHVNLTVRR (83 aa)). A disordered region spans residues 932–984 (ENEVPSPASSHHSSNQPASLTEEKRTPQGSQNSLNTVSSGSGSTSGIGSGGGG). 2 stretches are compositionally biased toward polar residues: residues 938-950 (PASSHHSSNQPAS) and 958-967 (PQGSQNSLNT). Residues 974–984 (STSGIGSGGGG) are compositionally biased toward gly residues. The 97-residue stretch at 997–1093 (DVEIRRGENE…TVTLRIIPGD (97 aa)) folds into the PDZ 5 domain. A Phosphoserine modification is found at Ser1070. A compositionally biased stretch (polar residues) spans 1111–1129 (TTTHAPSQQGTQETRTTTK). The disordered stretch occupies residues 1111 to 1142 (TTTHAPSQQGTQETRTTTKPKPDSQFEFKGPQ). In terms of domain architecture, PDZ 6 spans 1151 to 1233 (TVELERGAKG…RVRLFLRRGD (83 aa)).

Part of a complex composed of AMOTL2, MAGI1 and CDH5, within the complex AMOTL2 acts as a scaffold protein for the interaction of MAGI1 with CDH5. The complex is required for coupling actin fibers to cell junctions in endothelial cells. Interacts through its WW 2 domain with SYNPO and through its PDZ 5 domain with ACTN4. Interacts with cytoplasmic domain of ADGRB1. Interacts via its WW domains with DRPLA. Interacts with ESAM, LRP2 and CXADR. May interact with CTNNB1. Interacts through its PDZ 1 domain with NET1. Interacts with ASIC3 and AMOT. Interacts with FCHSD2. Interacts with IGSF5/JAM4 and through its PDZ 2 and 3 domains with NPHS1 forming a tripartite complex. Interacts with DDN. May interact (via PDZ domain) with RAPGEF2. Interacts with DLL1. Interacts with KCNJ10 and possibly with KCNJ10/KCNJ16 heterodimer; this interaction may facilitate KCNJ10/KCNJ16 potassium channel expression at the basolateral membrane in kidney tubular cells. Interacts with PRRG4 (via cytoplasmic domain).

The protein localises to the cell junction. It is found in the tight junction. The protein resides in the cytoplasm. It localises to the membrane. In terms of biological role, plays a role in coupling actin fibers to cell junctions in endothelial cells, via its interaction with AMOTL2 and CDH5. May regulate acid-induced ASIC3 currents by modulating its expression at the cell surface. This Rattus norvegicus (Rat) protein is Membrane-associated guanylate kinase, WW and PDZ domain-containing protein 1 (Magi1).